Here is a 252-residue protein sequence, read N- to C-terminus: Major prion protein (252 aa).

The signal sequence occupies residues 1–22; sequence MANLGCWMLFLFVATWSDLGLC. Residues 23–38 are interaction with ADGRG6; the sequence is KKRPKPGGWNTGGSRY. The interval 23–229 is interaction with GRB2, ERI3 and SYN1; the sequence is KKRPKPGGWN…ESQAYYQRGS (207 aa). Residues 26-106 are disordered; the sequence is PKPGGWNTGG…QWNKPSKPKT (81 aa). 5 repeat units span residues 51-58, 59-66, 67-74, 75-82, and 83-90. A 5 X 8 AA tandem repeats of P-H-G-G-G-W-G-Q region spans residues 51–90; the sequence is PQGGGWGQPHGGGWGQPHGGGWGQPHGGGWGQPHGGGWGQ. Positions 52-94 are enriched in gly residues; the sequence is QGGGWGQPHGGGWGQPHGGGWGQPHGGGWGQPHGGGWGQGGGT. Residues histidine 60, glycine 61, glycine 62, histidine 68, glycine 69, glycine 70, histidine 76, glycine 77, glycine 78, histidine 84, glycine 85, and glycine 86 each coordinate Cu(2+). The cysteines at positions 178 and 213 are disulfide-linked. Residues asparagine 180 and asparagine 196 are each glycosylated (N-linked (GlcNAc...) asparagine). A lipid anchor (GPI-anchor amidated serine) is attached at serine 229. A propeptide spans 230–252 (removed in mature form); it reads SMVLFSSPPVILLISFLIFLIVG.

The protein belongs to the prion family. In terms of assembly, monomer and homodimer. Has a tendency to aggregate into amyloid fibrils containing a cross-beta spine, formed by a steric zipper of superposed beta-strands. Soluble oligomers may represent an intermediate stage on the path to fibril formation. Copper binding may promote oligomerization. Interacts with GRB2, APP, ERI3/PRNPIP and SYN1. Mislocalized cytosolically exposed PrP interacts with MGRN1; this interaction alters MGRN1 subcellular location and causes lysosomal enlargement. Interacts with APP. Interacts with KIAA1191. Interacts with ADGRG6.

The protein resides in the cell membrane. It is found in the golgi apparatus. Functionally, its primary physiological function is unclear. May play a role in neuronal development and synaptic plasticity. May be required for neuronal myelin sheath maintenance. May promote myelin homeostasis through acting as an agonist for ADGRG6 receptor. May play a role in iron uptake and iron homeostasis. Soluble oligomers are toxic to cultured neuroblastoma cells and induce apoptosis (in vitro). Association with GPC1 (via its heparan sulfate chains) targets PRNP to lipid rafts. Also provides Cu(2+) or Zn(2+) for the ascorbate-mediated GPC1 deaminase degradation of its heparan sulfate side chains. The polypeptide is Major prion protein (PRNP) (Callithrix jacchus (White-tufted-ear marmoset)).